The following is a 208-amino-acid chain: Large ribosomal subunit protein uL3c (208 aa).

Positions 129–165 (TRGPMTHGSKNHREPGSIGQGSTPGKVHKGKKMAGRL) are disordered.

Belongs to the universal ribosomal protein uL3 family. As to quaternary structure, part of the 50S ribosomal subunit.

Its subcellular location is the plastid. The protein resides in the chloroplast. Its function is as follows. One of the primary rRNA binding proteins, it binds directly near the 3'-end of the 23S rRNA, where it nucleates assembly of the 50S subunit. The protein is Large ribosomal subunit protein uL3c (rpl3) of Rhodomonas salina (Cryptomonas salina).